Here is a 239-residue protein sequence, read N- to C-terminus: Uridylate kinase (239 aa).

12 to 15 (KLSG) is an ATP binding site. The involved in allosteric activation by GTP stretch occupies residues 20-25 (GDQGAG). Residue G54 coordinates UMP. ATP is bound by residues G55 and R59. UMP-binding positions include D74 and 135-142 (TGNPFFTT). ATP-binding residues include T162, Y168, and D171.

The protein belongs to the UMP kinase family. In terms of assembly, homohexamer.

The protein localises to the cytoplasm. It catalyses the reaction UMP + ATP = UDP + ADP. The protein operates within pyrimidine metabolism; CTP biosynthesis via de novo pathway; UDP from UMP (UMPK route): step 1/1. Allosterically activated by GTP. Inhibited by UTP. Catalyzes the reversible phosphorylation of UMP to UDP. The sequence is that of Uridylate kinase from Methylococcus capsulatus (strain ATCC 33009 / NCIMB 11132 / Bath).